The sequence spans 503 residues: Aspartyl/glutamyl-tRNA(Asn/Gln) amidotransferase subunit B (503 aa).

This sequence belongs to the GatB/GatE family. GatB subfamily. Heterotrimer of A, B and C subunits.

The catalysed reaction is L-glutamyl-tRNA(Gln) + L-glutamine + ATP + H2O = L-glutaminyl-tRNA(Gln) + L-glutamate + ADP + phosphate + H(+). It carries out the reaction L-aspartyl-tRNA(Asn) + L-glutamine + ATP + H2O = L-asparaginyl-tRNA(Asn) + L-glutamate + ADP + phosphate + 2 H(+). In terms of biological role, allows the formation of correctly charged Asn-tRNA(Asn) or Gln-tRNA(Gln) through the transamidation of misacylated Asp-tRNA(Asn) or Glu-tRNA(Gln) in organisms which lack either or both of asparaginyl-tRNA or glutaminyl-tRNA synthetases. The reaction takes place in the presence of glutamine and ATP through an activated phospho-Asp-tRNA(Asn) or phospho-Glu-tRNA(Gln). The chain is Aspartyl/glutamyl-tRNA(Asn/Gln) amidotransferase subunit B from Jannaschia sp. (strain CCS1).